The following is a 94-amino-acid chain: Integration host factor subunit beta (94 aa).

This sequence belongs to the bacterial histone-like protein family. Heterodimer of an alpha and a beta chain.

In terms of biological role, this protein is one of the two subunits of integration host factor, a specific DNA-binding protein that functions in genetic recombination as well as in transcriptional and translational control. The chain is Integration host factor subunit beta from Mesorhizobium japonicum (strain LMG 29417 / CECT 9101 / MAFF 303099) (Mesorhizobium loti (strain MAFF 303099)).